Consider the following 258-residue polypeptide: UPF0246 protein YaaA (258 aa).

This sequence belongs to the UPF0246 family.

The chain is UPF0246 protein YaaA from Escherichia coli O7:K1 (strain IAI39 / ExPEC).